The following is a 540-amino-acid chain: Transcription initiation factor IIF subunit alpha (540 aa).

Residues 1-26 (MDSQETKVFENVKQENPDEKKPKVEE) are compositionally biased toward basic and acidic residues. 2 disordered regions span residues 1-39 (MDSQETKVFENVKQENPDEKKPKVEEPDSQNNASTQSQQ) and 70-106 (IDPSKSFVPPIKMQRRDPNAPSSSNGEQNAEQGSSSN). Polar residues-rich tracts occupy residues 29 to 39 (SQNNASTQSQQ) and 89 to 106 (APSSSNGEQNAEQGSSSN). Phosphoserine is present on residues S259 and S261. Residues 280–382 (MEGNEEDNKK…REEKLKSRFS (103 aa)) adopt a coiled-coil conformation. The tract at residues 341–416 (YESDEEDEDP…SSQLQSPNTS (76 aa)) is disordered. Over residues 359–369 (SEEEVLQEEEE) the composition is skewed to acidic residues. Over residues 381–416 (FSANASKTNTPRPLERTPSSVSPVKASSQLQSPNTS) the composition is skewed to polar residues. Position 399 is a phosphoserine (S399).

This sequence belongs to the TFIIF alpha subunit family. In terms of assembly, component of the fcp1/TFIIF/polII complex via interaction of tfg3 with both tfg1/TFIIF-alpha and tfg2/TFIIF-beta subunits.

Its subcellular location is the nucleus. Functionally, TFIIF is a general transcription initiation factor that binds to RNA polymerase II and helps to recruit it to the initiation complex in collaboration with TFIIB. It promotes transcription elongation. The protein is Transcription initiation factor IIF subunit alpha (tfg1) of Schizosaccharomyces pombe (strain 972 / ATCC 24843) (Fission yeast).